The following is a 192-amino-acid chain: tRNA (pseudouridine(54)-N(1))-methyltransferase (192 aa).

Residues Leu-127 and Cys-181 each contribute to the S-adenosyl-L-methionine site.

The protein belongs to the methyltransferase superfamily. TrmY family. Homodimer.

The protein resides in the cytoplasm. The catalysed reaction is pseudouridine(54) in tRNA + S-adenosyl-L-methionine = N(1)-methylpseudouridine(54) in tRNA + S-adenosyl-L-homocysteine + H(+). Its function is as follows. Specifically catalyzes the N1-methylation of pseudouridine at position 54 (Psi54) in tRNAs. In Methanocella arvoryzae (strain DSM 22066 / NBRC 105507 / MRE50), this protein is tRNA (pseudouridine(54)-N(1))-methyltransferase.